Here is a 457-residue protein sequence, read N- to C-terminus: Adenylosuccinate synthetase isozyme 1 (457 aa).

A disordered region spans residues 1-25 (MSGTRASNDRPPSAGGVKRGRLQHE). Residues 42–48 (GDEGKGK) and 70–72 (GHT) each bind GTP. Residue D43 is the Proton acceptor of the active site. Residues D43 and G70 each contribute to the Mg(2+) site. Substrate is bound at residue D43. Residues 43–46 (DEGK), 68–71 (NAGH), T163, R177, N256, T271, and R335 each bind IMP. The active-site Proton donor is H71. 331–337 (VTTGRKR) provides a ligand contact to substrate. GTP is bound by residues R337, 363 to 365 (KLD), and 445 to 448 (GVGK).

Belongs to the adenylosuccinate synthetase family. As to quaternary structure, homodimer. Mg(2+) serves as cofactor.

Its subcellular location is the cytoplasm. The enzyme catalyses IMP + L-aspartate + GTP = N(6)-(1,2-dicarboxyethyl)-AMP + GDP + phosphate + 2 H(+). It functions in the pathway purine metabolism; AMP biosynthesis via de novo pathway; AMP from IMP: step 1/2. Its function is as follows. Component of the purine nucleotide cycle (PNC), which interconverts IMP and AMP to regulate the nucleotide levels in various tissues, and which contributes to glycolysis and ammoniagenesis. Catalyzes the first committed step in the biosynthesis of AMP from IMP. The protein is Adenylosuccinate synthetase isozyme 1 of Bos taurus (Bovine).